The following is a 208-amino-acid chain: MARYTKAKCRLCRREGEKLFIKGDRCFTDKCSYERRPYAPGIAGRMRKKMSDYAIQLREKQKVRRMYGVLEGQFRSYFKRADGMKGVTGANLLMLLETRLDNTVYRLGFANSRAQARQLVKHGIFTKNGRRVNVPSMHVKPGDVIEVREESRKIPVIAEAQEVIARRGCPEWLEADGANFKGEVKAMPTREDIQFPINEQLIVELYSK.

The region spanning 98–161 is the S4 RNA-binding domain; it reads TRLDNTVYRL…RKIPVIAEAQ (64 aa).

Belongs to the universal ribosomal protein uS4 family. In terms of assembly, part of the 30S ribosomal subunit. Contacts protein S5. The interaction surface between S4 and S5 is involved in control of translational fidelity.

Its function is as follows. One of the primary rRNA binding proteins, it binds directly to 16S rRNA where it nucleates assembly of the body of the 30S subunit. Functionally, with S5 and S12 plays an important role in translational accuracy. The polypeptide is Small ribosomal subunit protein uS4 (Maridesulfovibrio salexigens (strain ATCC 14822 / DSM 2638 / NCIMB 8403 / VKM B-1763) (Desulfovibrio salexigens)).